The chain runs to 193 residues: Putative 3-methyladenine DNA glycosylase (193 aa).

Belongs to the DNA glycosylase MPG family.

This chain is Putative 3-methyladenine DNA glycosylase, found in Nitrosospira multiformis (strain ATCC 25196 / NCIMB 11849 / C 71).